We begin with the raw amino-acid sequence, 609 residues long: UvrABC system protein C (609 aa).

The GIY-YIG domain occupies 15-92 (TGSGVYQMQD…IKQFRPRYNV (78 aa)). In terms of domain architecture, UVR spans 202-237 (DQVIIKLTERMEVTSENLVFEEAAHYRDQIRQLRRL).

Belongs to the UvrC family. In terms of assembly, interacts with UvrB in an incision complex.

It localises to the cytoplasm. In terms of biological role, the UvrABC repair system catalyzes the recognition and processing of DNA lesions. UvrC both incises the 5' and 3' sides of the lesion. The N-terminal half is responsible for the 3' incision and the C-terminal half is responsible for the 5' incision. The protein is UvrABC system protein C of Coxiella burnetii (strain RSA 493 / Nine Mile phase I).